The primary structure comprises 281 residues: Nucleoid occlusion protein (281 aa).

Positions methionine 1–glutamate 24 are disordered. Positions glutamate 145 to leucine 164 form a DNA-binding region, H-T-H motif.

It belongs to the ParB family.

The protein localises to the cytoplasm. Its subcellular location is the nucleoid. In terms of biological role, effects nucleoid occlusion by binding relatively nonspecifically to DNA and preventing the assembly of the division machinery in the vicinity of the nucleoid, especially under conditions that disturb the cell cycle. It helps to coordinate cell division and chromosome segregation by preventing the formation of the Z ring through the nucleoid, which would cause chromosome breakage. In Geobacillus kaustophilus (strain HTA426), this protein is Nucleoid occlusion protein.